Consider the following 223-residue polypeptide: tRNA (guanine-N(7)-)-methyltransferase (223 aa).

Positions 45, 70, and 125 each coordinate S-adenosyl-L-methionine. The active site involves Asp125. Substrate-binding positions include Lys129, Asp161, and 201-204; that span reads TEYE.

It belongs to the class I-like SAM-binding methyltransferase superfamily. TrmB family.

It catalyses the reaction guanosine(46) in tRNA + S-adenosyl-L-methionine = N(7)-methylguanosine(46) in tRNA + S-adenosyl-L-homocysteine. Its pathway is tRNA modification; N(7)-methylguanine-tRNA biosynthesis. Functionally, catalyzes the formation of N(7)-methylguanine at position 46 (m7G46) in tRNA. This Mesoplasma florum (strain ATCC 33453 / NBRC 100688 / NCTC 11704 / L1) (Acholeplasma florum) protein is tRNA (guanine-N(7)-)-methyltransferase.